Here is a 533-residue protein sequence, read N- to C-terminus: Na(+)/H(+) antiporter NhaB (533 aa).

11 helical membrane passes run 10-30, 67-87, 96-116, 131-165, 209-229, 247-267, 310-330, 355-375, 396-416, 454-474, and 481-501; these read IGNF…SFLI, PGGL…SQVL, VLLL…LLLF, VSLM…FYSI, LLMH…VGEP, IRMS…CFLV, AFVG…VGLI, EEAL…AVII, LVIF…VFVG, ATPN…APLI, and MVWM…MAIE.

It belongs to the NhaB Na(+)/H(+) (TC 2.A.34) antiporter family.

The protein resides in the cell inner membrane. The enzyme catalyses 2 Na(+)(in) + 3 H(+)(out) = 2 Na(+)(out) + 3 H(+)(in). In terms of biological role, na(+)/H(+) antiporter that extrudes sodium in exchange for external protons. The chain is Na(+)/H(+) antiporter NhaB from Shewanella sp. (strain MR-4).